Here is a 53-residue protein sequence, read N- to C-terminus: Large ribosomal subunit protein bL32 (53 aa).

Residues 1-20 (MAVPKRRVSHTRAAKRRTHY) show a composition bias toward basic residues. Residues 1–53 (MAVPKRRVSHTRAAKRRTHYKLTLPMPVKDADGTWRMPHHMNMTTGEYKTTKA) are disordered. A compositionally biased stretch (polar residues) spans 42 to 53 (NMTTGEYKTTKA).

This sequence belongs to the bacterial ribosomal protein bL32 family.

This chain is Large ribosomal subunit protein bL32, found in Sulfurovum sp. (strain NBC37-1).